The sequence spans 331 residues: Homoserine O-succinyltransferase (331 aa).

The active-site Acyl-thioester intermediate is the Cys-141. Residues Lys-162 and Ser-190 each contribute to the substrate site. Residue His-233 is the Proton acceptor of the active site. Glu-235 is an active-site residue. Arg-247 serves as a coordination point for substrate.

Belongs to the MetA family.

The protein localises to the cytoplasm. It catalyses the reaction L-homoserine + succinyl-CoA = O-succinyl-L-homoserine + CoA. It participates in amino-acid biosynthesis; L-methionine biosynthesis via de novo pathway; O-succinyl-L-homoserine from L-homoserine: step 1/1. Transfers a succinyl group from succinyl-CoA to L-homoserine, forming succinyl-L-homoserine. This Methylorubrum extorquens (strain DSM 6343 / CIP 106787 / DM4) (Methylobacterium extorquens) protein is Homoserine O-succinyltransferase.